The following is a 271-amino-acid chain: MINGETKIYGIIGNPVKHSLSPIMHNALFKKFGINAIYVPFEVKKDLKNAINGVKALDIQGVNVTMPYKEEVIKFLDELSEDSQNIGSVNTVVNLEGKLVGYTTDGIGARRALERFTQVDGANILILGAGGAGKAIAYELSKVANVVVLNRTIEKAKRLEKFGIVGDSLEALPYYVEWADILINATSVGMNEEKSLVPKNLLRPGLVVMDIVYKPLNTLLLRYAQEKGCIAIDGLWMLVYQGAESFRLWTGEEGDVELMRRVALAWLRERK.

Residues Ser-19–Ser-21 and Thr-65 each bind shikimate. The Proton acceptor role is filled by Lys-69. An NADP(+)-binding site is contributed by Glu-81. Positions 90 and 105 each coordinate shikimate. NADP(+) contacts are provided by residues Gly-128–Ala-132, Asn-150–Lys-155, and Ile-211. Tyr-213 provides a ligand contact to shikimate. Position 234 (Gly-234) interacts with NADP(+).

It belongs to the shikimate dehydrogenase family. As to quaternary structure, homodimer.

It carries out the reaction shikimate + NADP(+) = 3-dehydroshikimate + NADPH + H(+). The protein operates within metabolic intermediate biosynthesis; chorismate biosynthesis; chorismate from D-erythrose 4-phosphate and phosphoenolpyruvate: step 4/7. Its function is as follows. Involved in the biosynthesis of the chorismate, which leads to the biosynthesis of aromatic amino acids. Catalyzes the reversible NADPH linked reduction of 3-dehydroshikimate (DHSA) to yield shikimate (SA). The chain is Shikimate dehydrogenase (NADP(+)) from Pyrococcus furiosus (strain ATCC 43587 / DSM 3638 / JCM 8422 / Vc1).